A 485-amino-acid chain; its full sequence is Bcl-2-like protein 13 (485 aa).

Residues 14–30 (ETKYVVLSYLGLLSQEK) carry the BH4 motif. Ser-38 is subject to Phosphoserine. The short motif at 100–116 (MEDCLAHLGEKVSQELK) is the BH3 element. The BH1 signature appears at 147–157 (ASGWNKILVPL). A BH2 motif is present at residues 193-206 (YIIQQGGWGTVFSL). The segment at 218 to 248 (AEDSNDIYILPSDNSGQVSPPESPTVTTSWQ) is disordered. Positions 229-248 (SDNSGQVSPPESPTVTTSWQ) are enriched in polar residues. The A repeat unit spans residues 246-256 (SWQSESLPVSL). Phosphoserine occurs at positions 259, 261, 303, 326, 371, 375, 410, 420, 426, 429, and 444. One copy of the A; approximate repeat lies at 261–271 (SWHTESLPVSL). The tract at residues 418–451 (EESLVEELSPASEKKPVPPSEGKSRLSPAGEMKP) is disordered. Residues 425 to 441 (LSPASEKKPVPPSEGKS) form a B repeat. The B; approximate repeat unit spans residues 443–459 (LSPAGEMKPMPLSEGKS). The helical transmembrane segment at 460–480 (ILLFGGAAAVAILAVAIGVAL) threads the bilayer.

It belongs to the Bcl-2 family. As to quaternary structure, monomer. Ubiquitous, with the highest levels of expression in heart, placenta and pancreas.

It localises to the mitochondrion membrane. The protein localises to the nucleus. Functionally, may promote the activation of caspase-3 and apoptosis. The chain is Bcl-2-like protein 13 (BCL2L13) from Homo sapiens (Human).